Reading from the N-terminus, the 316-residue chain is Ribosomal RNA small subunit methyltransferase H (316 aa).

S-adenosyl-L-methionine is bound by residues 42–44 (GGH), aspartate 62, phenylalanine 86, aspartate 104, and glutamine 111.

This sequence belongs to the methyltransferase superfamily. RsmH family.

Its subcellular location is the cytoplasm. The enzyme catalyses cytidine(1402) in 16S rRNA + S-adenosyl-L-methionine = N(4)-methylcytidine(1402) in 16S rRNA + S-adenosyl-L-homocysteine + H(+). Specifically methylates the N4 position of cytidine in position 1402 (C1402) of 16S rRNA. This chain is Ribosomal RNA small subunit methyltransferase H, found in Polynucleobacter necessarius subsp. necessarius (strain STIR1).